The sequence spans 214 residues: MKYELSAKEARVIGCLLEKQVTTPDQYPLSLNGIQLACNQKTNREPVMELTESEVQQILDLLLKKHFLRTLSGFGNRVVKYEHRFCNSEFGQLKLSAAEVAVVATLLLRGAQTPGELRTRTNRMHEFNDVSEVEQVLTNLSAREDGPFVVRLAREPGKRESRFMHLFCGQIDEAPAEAALENDTELTQRVSVLENEVAQLKQQLQALLERGTHD.

The protein belongs to the UPF0502 family.

The sequence is that of UPF0502 protein Spro_2794 from Serratia proteamaculans (strain 568).